The following is a 678-amino-acid chain: Geranylgeranyl transferase type-2 subunit alpha 1 (678 aa).

PFTA repeat units lie at residues 40–74 (YTNE…DRLA), 86–120 (ILDE…KGHS), 121–155 (SVGN…LTNR), 156–190 (SEQD…SLLA), and 201–235 (KIPE…QTLN). 5 LRR repeats span residues 510-532 (MNNL…VEKL), 533-554 (LFVQ…LEAM), 555-578 (QLLS…SLRH), 580-604 (KQLK…RYLC), and 638-663 (DLNL…VLQV).

The protein belongs to the protein prenyltransferase subunit alpha family. As to quaternary structure, heterotrimer composed of the alpha subunit RGTA, the beta subunit RGTB and REP; within this trimer, RGTA and RGTB form the catalytic component, while REP mediates peptide substrate binding.

The catalysed reaction is geranylgeranyl diphosphate + L-cysteinyl-[protein] = S-geranylgeranyl-L-cysteinyl-[protein] + diphosphate. Its activity is regulated as follows. The enzymatic reaction requires the aid of the Rab escort protein REP. Its function is as follows. Catalyzes the transfer of a geranylgeranyl moiety from geranylgeranyl diphosphate to both cysteines of Rab proteins with the C-terminal sequence -CCXX, CXXX, -XCCX and -XCXC, such as RABA1A, RABA2A, RABF2A and RABG2. In vitro, can prenylate PGGTI targets with the C-terminal Cys-aliphatic-aliphatic-X (CaaX) with leucine in the terminal position. Substrates with the C-terminal sequence -CSIL such as ARAC11/ROP1 or GG2/AGG2 are prenylated independently of REP and when the alpha subunit is associated with a beta subunit (RGTB1 or RGTB2). The sequence is that of Geranylgeranyl transferase type-2 subunit alpha 1 from Arabidopsis thaliana (Mouse-ear cress).